We begin with the raw amino-acid sequence, 153 residues long: Transcriptional repressor NrdR (153 aa).

A zinc finger spans residues C3–C33. Residues L48–T138 form the ATP-cone domain.

It belongs to the NrdR family. The cofactor is Zn(2+).

Negatively regulates transcription of bacterial ribonucleotide reductase nrd genes and operons by binding to NrdR-boxes. The protein is Transcriptional repressor NrdR of Clostridioides difficile (strain 630) (Peptoclostridium difficile).